The primary structure comprises 76 residues: UPF0729 protein C18orf32 homolog (76 aa).

The necessary for its localzation to the endoplasmic reticulum and lipid droplets stretch occupies residues 1 to 37 (MVCIPCIVIPVLLWVYKKFLEPYIYPLISPFVSRMWP). Residues 47 to 56 (KNKGKVDYKG) show a composition bias toward basic and acidic residues. The interval 47 to 76 (KNKGKVDYKGADINGLPTRGPTEMCDKKKD) is disordered.

Belongs to the UPF0729 family. Interacts with DERL1 and AMFR. In terms of processing, undergoes ER-associated degradation (ERAD).

It is found in the endoplasmic reticulum. It localises to the lipid droplet. In terms of biological role, may activate the NF-kappa-B signaling pathway. This chain is UPF0729 protein C18orf32 homolog, found in Bos taurus (Bovine).